Consider the following 637-residue polypeptide: Sodium-dependent nutrient amino acid transporter 1 (637 aa).

The segment covering 1-17 has biased composition (polar residues); it reads MELKTMPQNGANAGTQH. The disordered stretch occupies residues 1–39; it reads MELKTMPQNGANAGTQHNNNSNNKPDNNEKEAQKKEPER. At 1–47 the chain is on the cytoplasmic side; the sequence is MELKTMPQNGANAGTQHNNNSNNKPDNNEKEAQKKEPERTNWSNGLE. Positions 26–39 are enriched in basic and acidic residues; sequence DNNEKEAQKKEPER. 3 helical membrane-spanning segments follow: residues 48 to 68, 75 to 95, and 128 to 148; these read FLMS…FPFT, GAFL…MYYL, and TICI…YLFV. Asn181 and Asn195 each carry an N-linked (GlcNAc...) asparagine glycan. 9 helical membrane passes run 225–245, 254–274, 303–323, 337–357, 397–417, 443–463, 470–490, 515–535, and 549–569; these read PDWK…LVIM, AAYF…GRAV, AVVQ…MFAS, IVTT…FAIL, LFSA…IVAL, ICGF…ILTL, TYVV…IYGL, FFTP…ISPI, and AGWV…WWYI.

The protein belongs to the sodium:neurotransmitter symporter (SNF) (TC 2.A.22) family.

It is found in the membrane. Its function is as follows. Unusual broad substrate spectrum amino acid:sodium cotransporter that promotes absorption of the D isomers of essential amino acids. Neutral amino acids are the preferred substrates, especially methionine and phenylalanine. This chain is Sodium-dependent nutrient amino acid transporter 1, found in Drosophila virilis (Fruit fly).